The primary structure comprises 148 residues: Deoxyuridine 5'-triphosphate nucleotidohydrolase (148 aa).

Substrate is bound by residues 67-69 (RSG), N80, 84-86 (LID), and M94.

This sequence belongs to the dUTPase family. Mg(2+) serves as cofactor.

The enzyme catalyses dUTP + H2O = dUMP + diphosphate + H(+). The protein operates within pyrimidine metabolism; dUMP biosynthesis; dUMP from dCTP (dUTP route): step 2/2. Functionally, this enzyme is involved in nucleotide metabolism: it produces dUMP, the immediate precursor of thymidine nucleotides and it decreases the intracellular concentration of dUTP so that uracil cannot be incorporated into DNA. This chain is Deoxyuridine 5'-triphosphate nucleotidohydrolase, found in Francisella tularensis subsp. tularensis (strain FSC 198).